Here is a 166-residue protein sequence, read N- to C-terminus: Crossover junction endodeoxyribonuclease RuvC (166 aa).

Catalysis depends on residues aspartate 7, glutamate 70, and histidine 143. Mg(2+) contacts are provided by aspartate 7, glutamate 70, and histidine 143.

The protein belongs to the RuvC family. In terms of assembly, homodimer which binds Holliday junction (HJ) DNA. The HJ becomes 2-fold symmetrical on binding to RuvC with unstacked arms; it has a different conformation from HJ DNA in complex with RuvA. In the full resolvosome a probable DNA-RuvA(4)-RuvB(12)-RuvC(2) complex forms which resolves the HJ. Requires Mg(2+) as cofactor.

It localises to the cytoplasm. The catalysed reaction is Endonucleolytic cleavage at a junction such as a reciprocal single-stranded crossover between two homologous DNA duplexes (Holliday junction).. The RuvA-RuvB-RuvC complex processes Holliday junction (HJ) DNA during genetic recombination and DNA repair. Endonuclease that resolves HJ intermediates. Cleaves cruciform DNA by making single-stranded nicks across the HJ at symmetrical positions within the homologous arms, yielding a 5'-phosphate and a 3'-hydroxyl group; requires a central core of homology in the junction. The consensus cleavage sequence is 5'-(A/T)TT(C/G)-3'. Cleavage occurs on the 3'-side of the TT dinucleotide at the point of strand exchange. HJ branch migration catalyzed by RuvA-RuvB allows RuvC to scan DNA until it finds its consensus sequence, where it cleaves and resolves the cruciform DNA. In Thermus thermophilus (strain ATCC BAA-163 / DSM 7039 / HB27), this protein is Crossover junction endodeoxyribonuclease RuvC.